The following is a 177-amino-acid chain: ATP synthase subunit delta (177 aa).

It belongs to the ATPase delta chain family. As to quaternary structure, F-type ATPases have 2 components, F(1) - the catalytic core - and F(0) - the membrane proton channel. F(1) has five subunits: alpha(3), beta(3), gamma(1), delta(1), epsilon(1). F(0) has three main subunits: a(1), b(2) and c(10-14). The alpha and beta chains form an alternating ring which encloses part of the gamma chain. F(1) is attached to F(0) by a central stalk formed by the gamma and epsilon chains, while a peripheral stalk is formed by the delta and b chains.

It is found in the cell inner membrane. In terms of biological role, f(1)F(0) ATP synthase produces ATP from ADP in the presence of a proton or sodium gradient. F-type ATPases consist of two structural domains, F(1) containing the extramembraneous catalytic core and F(0) containing the membrane proton channel, linked together by a central stalk and a peripheral stalk. During catalysis, ATP synthesis in the catalytic domain of F(1) is coupled via a rotary mechanism of the central stalk subunits to proton translocation. This protein is part of the stalk that links CF(0) to CF(1). It either transmits conformational changes from CF(0) to CF(1) or is implicated in proton conduction. This Shewanella putrefaciens (strain CN-32 / ATCC BAA-453) protein is ATP synthase subunit delta.